The chain runs to 362 residues: UDP-3-O-acylglucosamine N-acyltransferase (362 aa).

The active-site Proton acceptor is the H251.

This sequence belongs to the transferase hexapeptide repeat family. LpxD subfamily. Homotrimer.

The catalysed reaction is a UDP-3-O-[(3R)-3-hydroxyacyl]-alpha-D-glucosamine + a (3R)-hydroxyacyl-[ACP] = a UDP-2-N,3-O-bis[(3R)-3-hydroxyacyl]-alpha-D-glucosamine + holo-[ACP] + H(+). The protein operates within bacterial outer membrane biogenesis; LPS lipid A biosynthesis. Its function is as follows. Catalyzes the N-acylation of UDP-3-O-acylglucosamine using 3-hydroxyacyl-ACP as the acyl donor. Is involved in the biosynthesis of lipid A, a phosphorylated glycolipid that anchors the lipopolysaccharide to the outer membrane of the cell. This is UDP-3-O-acylglucosamine N-acyltransferase from Cupriavidus pinatubonensis (strain JMP 134 / LMG 1197) (Cupriavidus necator (strain JMP 134)).